Reading from the N-terminus, the 354-residue chain is MYREWVVVNVFMMLYVQLVQGSSNEHGPVKRSSQSTLERSEQQIRAASSLEELLRITHSEDWKLWRCRLRLKSFTSMDSRSASHRSTRFAATFYDIETLKVIDEEWQRTQCSPRETCVEVASELGKSTNTFFKPPCVNVFRCGGCCNEESLICMNTSTSYISKQLFEISVPLTSVPELVPVKVANHTGCKCLPTAPRHPYSIIRRSIQIPEEDRCSHSKKLCPIDMLWDSNKCKCVLQEENPLAGTEDHSHLQEPALCGPHMMFDEDRCECVCKTPCPKDLIQHPKNCSCFECKESLETCCQKHKLFHPDTCSCEDRCPFHTRPCASGKTACAKHCRFPKEKRAAQGPHSRKNP.

An N-terminal signal peptide occupies residues 1–21 (MYREWVVVNVFMMLYVQLVQG). Residues 22–88 (SSNEHGPVKR…SRSASHRSTR (67 aa)) constitute a propeptide, or 99 (in a minor form). Disulfide bonds link C111/C153, C142/C189, and C146/C191. 2 N-linked (GlcNAc...) asparagine glycosylation sites follow: N155 and N185. Positions 206-354 (SIQIPEEDRC…AQGPHSRKNP (149 aa)) are excised as a propeptide. A 1; approximate repeat occupies 222 to 237 (CPIDMLWDSNKCKCVL). The interval 222-318 (CPIDMLWDSN…PDTCSCEDRC (97 aa)) is 4 X 16 AA repeats of C-X(10)-C-X-C-X(1,3)-C. 3 repeat units span residues 258–273 (CGPH…ECVC), 277–293 (CPKD…CFEC), and 301–318 (CQKH…EDRC). An N-linked (GlcNAc...) asparagine glycan is attached at N287.

It belongs to the PDGF/VEGF growth factor family. As to quaternary structure, homodimer; non-covalent and antiparallel. Undergoes a complex proteolytic maturation which generates a variety of processed secreted forms with increased activity toward VEGFR-3 and VEGFR-2. VEGF-D first form an antiparallel homodimer linked by disulfide bonds before secretion. The fully processed VEGF-D is composed mostly of two VEGF homology domains (VHDs) bound by non-covalent interactions. Highly expressed in lung, heart, small intestine and fetal lung, and at lower levels in skeletal muscle, colon, and pancreas.

Its subcellular location is the secreted. In terms of biological role, growth factor active in angiogenesis, lymphangiogenesis and endothelial cell growth, stimulating their proliferation and migration and also has effects on the permeability of blood vessels. May function in the formation of the venous and lymphatic vascular systems during embryogenesis, and also in the maintenance of differentiated lymphatic endothelium in adults. Binds and activates VEGFR-2 (KDR/FLK1) and VEGFR-3 (FLT4) receptors. The sequence is that of Vascular endothelial growth factor D from Homo sapiens (Human).